A 385-amino-acid polypeptide reads, in one-letter code: Lysine 6-dehydrogenase (385 aa).

It belongs to the saccharopine dehydrogenase family. In terms of assembly, homohexamer.

The enzyme catalyses L-lysine + NAD(+) = L-1-piperideine-6-carboxylate + NH4(+) + NADH + 2 H(+). In terms of biological role, catalyzes the oxidative deamination of L-lysine in the presence of NAD. Can also use (S)-(2-aminoethyl)-L-cysteine as a substrate, but more slowly. Can use both NAD and NADP but the preferred substrate is NAD. This chain is Lysine 6-dehydrogenase (lysDH), found in Geobacillus stearothermophilus (Bacillus stearothermophilus).